A 237-amino-acid chain; its full sequence is Ribosomal RNA small subunit methyltransferase G (237 aa).

Residues glycine 75, phenylalanine 80, 127 to 128 (AE), and arginine 146 contribute to the S-adenosyl-L-methionine site.

It belongs to the methyltransferase superfamily. RNA methyltransferase RsmG family.

It localises to the cytoplasm. In terms of biological role, specifically methylates the N7 position of a guanine in 16S rRNA. The protein is Ribosomal RNA small subunit methyltransferase G of Synechococcus sp. (strain RCC307).